The chain runs to 605 residues: Aspartate--tRNA(Asp/Asn) ligase (605 aa).

Glu183 is a binding site for L-aspartate. The aspartate stretch occupies residues 207–210; sequence QLYK. L-aspartate is bound at residue Arg229. ATP contacts are provided by residues 229-231 and Gln238; that span reads RDE. His456 is an L-aspartate binding site. Position 490 (Glu490) interacts with ATP. Arg497 contributes to the L-aspartate binding site. 542–545 contributes to the ATP binding site; sequence GLDR.

This sequence belongs to the class-II aminoacyl-tRNA synthetase family. Type 1 subfamily. As to quaternary structure, homodimer.

The protein resides in the cytoplasm. The catalysed reaction is tRNA(Asx) + L-aspartate + ATP = L-aspartyl-tRNA(Asx) + AMP + diphosphate. Its function is as follows. Aspartyl-tRNA synthetase with relaxed tRNA specificity since it is able to aspartylate not only its cognate tRNA(Asp) but also tRNA(Asn). Reaction proceeds in two steps: L-aspartate is first activated by ATP to form Asp-AMP and then transferred to the acceptor end of tRNA(Asp/Asn). The sequence is that of Aspartate--tRNA(Asp/Asn) ligase from Heliobacterium modesticaldum (strain ATCC 51547 / Ice1).